The chain runs to 1187 residues: Probable histidine kinase 5 (1187 aa).

The Extracellular segment spans residues 1-175 (MSRVGECGGG…QNNALSFNHG (175 aa)). Residues 176-196 (MIFSLSASLGIVVILVVITIF) form a helical membrane-spanning segment. Topologically, residues 197–226 (KRGKQANELCQHEKLLQTPSVKISRKWSKR) are cytoplasmic. The chain crosses the membrane as a helical span at residues 227 to 247 (ALLLGVLVGLCSSVWIFSSMH). The Extracellular portion of the chain corresponds to 248 to 531 (ADVVARRIEN…FKHAPSLPWS (284 aa)). One can recognise a CHASE domain in the interval 295–519 (NPSAIDQKTF…GDPTRKHVMH (225 aa)). Residues 532 to 552 (AIMISSAVAIIVLLVGYIIYA) traverse the membrane as a helical segment. Over 553 to 1187 (TLNSLEEAED…LEADATDPLT (635 aa)) the chain is Cytoplasmic. Residues 587–862 (TVSHEIRTPM…TFSFTAIFKE (276 aa)) form the Histidine kinase domain. His-590 is subject to Phosphohistidine; by autocatalysis. 2 Response regulatory domains span residues 886–1017 (RALV…SKAL) and 1041–1178 (NILV…AHFL). A 4-aspartylphosphate mark is found at Asp-942 and Asp-1091.

Post-translationally, activation probably requires a transfer of a phosphate group between a His in the transmitter domain and an Asp of the receiver domain. As to expression, highly expressed in young leaves and at lower levels in roots, mature leaves, stems and spikelets.

Its subcellular location is the cell membrane. The enzyme catalyses ATP + protein L-histidine = ADP + protein N-phospho-L-histidine.. Cytokinin receptor related to bacterial two-component regulators. Functions as a histidine kinase and transmits the stress signal to a downstream MAPK cascade. The polypeptide is Probable histidine kinase 5 (Oryza sativa subsp. japonica (Rice)).